A 505-amino-acid polypeptide reads, in one-letter code: RNA-splicing ligase RtcB homolog (505 aa).

Residues aspartate 119, cysteine 122, histidine 227, histidine 259, and histidine 353 each coordinate Mn(2+). A GMP-binding site is contributed by 226-230 (NHYAE). Residues 353-354 (HN), 402-405 (GGTM), serine 409, 428-431 (HGAG), and lysine 504 each bind GMP. Histidine 428 functions as the GMP-histidine intermediate in the catalytic mechanism.

Belongs to the RtcB family. Catalytic component of the tRNA-splicing ligase complex. Mn(2+) serves as cofactor.

It localises to the nucleus. Its subcellular location is the cytoplasm. It carries out the reaction a 3'-end 3'-phospho-ribonucleotide-RNA + a 5'-end dephospho-ribonucleoside-RNA + GTP = a ribonucleotidyl-ribonucleotide-RNA + GMP + diphosphate. It catalyses the reaction a 3'-end 2',3'-cyclophospho-ribonucleotide-RNA + a 5'-end dephospho-ribonucleoside-RNA + GTP + H2O = a ribonucleotidyl-ribonucleotide-RNA + GMP + diphosphate + H(+). Its function is as follows. Catalytic subunit of the tRNA-splicing ligase complex that acts by directly joining spliced tRNA halves to mature-sized tRNAs by incorporating the precursor-derived splice junction phosphate into the mature tRNA as a canonical 3',5'-phosphodiester. May act as an RNA ligase with broad substrate specificity, and may function toward other RNAs. In Danio rerio (Zebrafish), this protein is RNA-splicing ligase RtcB homolog.